Here is a 261-residue protein sequence, read N- to C-terminus: MEKVKAKKHLGQHFLKDESIAKAIADTLSLKGYDEVLEIGPGMGVLTKYLLDKPVNTRVIEIDTESVEYLGVNYPKLKDKIISEDFLKYNINQVYENKQFAIIGNFPYNISSQIVFRTLEFRDQIPEFSGMFQKEVAERICEKKGSKTYGILSVLAQAFYDTEYLFTVSENVFIPPPKVKSGVMKMTRKEDYSLPCGEKLFFTVVKTAFQQRRKTLRNSLKTLNLSDKLREDIIFDKRPEQLSVEEFIVLTQKIEADGVQS.

Residues His-13, Leu-15, Gly-40, Glu-61, Asp-85, and Asn-105 each contribute to the S-adenosyl-L-methionine site.

The protein belongs to the class I-like SAM-binding methyltransferase superfamily. rRNA adenine N(6)-methyltransferase family. RsmA subfamily.

It is found in the cytoplasm. It catalyses the reaction adenosine(1518)/adenosine(1519) in 16S rRNA + 4 S-adenosyl-L-methionine = N(6)-dimethyladenosine(1518)/N(6)-dimethyladenosine(1519) in 16S rRNA + 4 S-adenosyl-L-homocysteine + 4 H(+). Specifically dimethylates two adjacent adenosines (A1518 and A1519) in the loop of a conserved hairpin near the 3'-end of 16S rRNA in the 30S particle. May play a critical role in biogenesis of 30S subunits. The sequence is that of Ribosomal RNA small subunit methyltransferase A from Flavobacterium johnsoniae (strain ATCC 17061 / DSM 2064 / JCM 8514 / BCRC 14874 / CCUG 350202 / NBRC 14942 / NCIMB 11054 / UW101) (Cytophaga johnsonae).